We begin with the raw amino-acid sequence, 855 residues long: Valine--tRNA ligase (855 aa).

The 'HIGH' region motif lies at 42–52; the sequence is PTISGKLHIGH. Residues 574–578 carry the 'KMSKS' region motif; it reads KMSKS. An ATP-binding site is contributed by Lys-577.

Belongs to the class-I aminoacyl-tRNA synthetase family. ValS type 2 subfamily. In terms of assembly, monomer.

It is found in the cytoplasm. It carries out the reaction tRNA(Val) + L-valine + ATP = L-valyl-tRNA(Val) + AMP + diphosphate. Functionally, catalyzes the attachment of valine to tRNA(Val). As ValRS can inadvertently accommodate and process structurally similar amino acids such as threonine, to avoid such errors, it has a 'posttransfer' editing activity that hydrolyzes mischarged Thr-tRNA(Val) in a tRNA-dependent manner. The protein is Valine--tRNA ligase of Wolbachia sp. subsp. Brugia malayi (strain TRS).